Reading from the N-terminus, the 444-residue chain is Shufflon protein B' (444 aa).

Residues 1–361 (MKKYDRGWAS…TGAILSCQSG (361 aa)) form a constant region region. A variable region region spans residues 362–444 (TWRKVGSGEL…GSITVYAICQ (83 aa)).

The sequence is that of Shufflon protein B' from Escherichia coli.